The following is a 150-amino-acid chain: Arginine repressor (150 aa).

It belongs to the ArgR family.

It is found in the cytoplasm. The protein operates within amino-acid biosynthesis; L-arginine biosynthesis [regulation]. Regulates arginine biosynthesis genes. This chain is Arginine repressor, found in Staphylococcus saprophyticus subsp. saprophyticus (strain ATCC 15305 / DSM 20229 / NCIMB 8711 / NCTC 7292 / S-41).